A 483-amino-acid polypeptide reads, in one-letter code: MKEEKEHRPKEKRVTLLTPAGATGSGGGTSGDSSKGEDKQDRNKEKKEALSKVVIRRLPPTLTKEQLQEHLQPMPEHDYFEFFSNDTSLYPHMYARAYINFKNQEDIILFRDRFDGYVFLDNKGQEYPAIVEFAPFQKAAKKKTKKRDTKVGTIDDDPEYRKFLESYATDNEKMTSTPETLLEEIEAKNRELIAKKTTPLLSFLKNKQRMREEKREERRRREIERKRQREEERRKWKEEEKRKRKDIEKLKKIDRIPERDKLKDEPKIKVHRFLLQAVNQKNLLKKPEKGDEKELDKREKAKKLDKENLSDERASGQSCTLPKRSDSELKDEKPKRPEDESGRDYREREREYERDQERILRERERLKRQEEERRRQKERYEKEKTFKRKEEEMKKEKDTLRDKGKKAESTESIGSSEKTEKKEEVVKRDRIRNKDRPAMQLYQPGARSRNRLCPPDDSTKSGDSAAERKQESGISHRKEGGEE.

2 stretches are compositionally biased toward basic and acidic residues: residues methionine 1 to valine 14 and serine 34 to leucine 50. The disordered stretch occupies residues methionine 1 to serine 51. Positions serine 30–arginine 255 are necessary for interaction with UPF2. Positions lysine 52–arginine 57 are binds to UPF2. Phosphothreonine is present on residues threonine 169 and threonine 198. Residues asparagine 206 to glutamate 483 are disordered. Composition is skewed to basic and acidic residues over residues arginine 209–isoleucine 268, lysine 285–alanine 314, lysine 323–serine 409, and glutamate 417–proline 437. At serine 310 the chain carries Phosphoserine. The sufficient for association with EJC core stretch occupies residues glutamate 424–glutamate 483. The necessary for interaction with RBM8A and for activating NMD stretch occupies residues arginine 430 to arginine 447. At arginine 447 the chain carries Omega-N-methylarginine. Residues aspartate 457–glutamate 483 show a composition bias toward basic and acidic residues.

Belongs to the RENT3 family. Found in a post-splicing messenger ribonucleoprotein (mRNP) complex. Core component of the mRNA splicing-dependent exon junction complex (EJC); the core complex contains CASC3, EIF4A3, MAGOH or MAGOHB, and RBM8A. The EJC core components EIF4A3 and the MAGOH-RBM8A dimer form a composite binding site for UPF3B which overlaps with the EJC binding site for WIBG. Interacts with EST1A, UPF2 and RBM8A. Interacts with CPSF6. Interacts with DHX34; the interaction is RNA-independent. As to expression, expressed in testis, uterus, prostate, heart, muscle, brain, spinal cord and placenta.

Its subcellular location is the nucleus. It is found in the cytoplasm. Involved in nonsense-mediated decay (NMD) of mRNAs containing premature stop codons by associating with the nuclear exon junction complex (EJC) and serving as link between the EJC core and NMD machinery. Recruits UPF2 at the cytoplasmic side of the nuclear envelope and the subsequent formation of an UPF1-UPF2-UPF3 surveillance complex (including UPF1 bound to release factors at the stalled ribosome) is believed to activate NMD. In cooperation with UPF2 stimulates both ATPase and RNA helicase activities of UPF1. Binds spliced mRNA upstream of exon-exon junctions. In vitro, stimulates translation; the function is independent of association with UPF2 and components of the EJC core. This is Regulator of nonsense transcripts 3B from Homo sapiens (Human).